We begin with the raw amino-acid sequence, 120 residues long: U13-lycotoxin-Ls1a (120 aa).

The signal sequence occupies residues 1–16; that stretch reads MKILFVLISILYAVYC. A propeptide spanning residues 17–54 is cleaved from the precursor; that stretch reads FSSEEDVDSAYLANELEPVEDINSEQYAALEPKEEQGR. Intrachain disulfides connect Cys56–Cys70, Cys63–Cys76, Cys69–Cys87, and Cys78–Cys85. Positions 56–95 constitute an Agouti domain; the sequence is CADMGQDCKDDCDCCLNIATCNCWFGRYFCSCTFGDYQTC.

This sequence belongs to the neurotoxin 05 (agouti) family. Post-translationally, contains 6 disulfide bonds. Expressed by the venom gland.

Its subcellular location is the secreted. The protein is U13-lycotoxin-Ls1a of Lycosa singoriensis (Wolf spider).